We begin with the raw amino-acid sequence, 833 residues long: Serine-rich coiled-coil domain-containing protein 2 (833 aa).

Residues 178–208 (NRSSGNVQKPRVNSCASRSSSGESLAQSPDN) are disordered. Positions 191–208 (SCASRSSSGESLAQSPDN) are enriched in polar residues. The residue at position 222 (serine 222) is a Phosphoserine. 4 disordered regions span residues 321 to 345 (LLKS…PADM), 424 to 452 (NRTR…FDSP), 478 to 508 (KHTS…SSDG), and 602 to 631 (DHYH…ESPL). A Phosphoserine modification is found at serine 451. Over residues 496 to 506 (SSFELSPSDSS) the composition is skewed to low complexity. Residues 606–615 (LSHPGHYHHH) are compositionally biased toward basic residues. A coiled-coil region spans residues 711–747 (DQIYKNEDLLNEITQLKEEIKKKDEKIQLLEQQLATR). The disordered stretch occupies residues 789–833 (FQGMPRTVPPHRRQTSSTTAFQQPSQIYRPRPGKTNKATTYRGPQ). Positions 803–814 (TSSTTAFQQPSQ) are enriched in polar residues.

Belongs to the CCSER family. Expressed in brain (at protein level).

It is found in the cytoplasm. The protein localises to the cytoskeleton. Its function is as follows. Microtubule-binding protein which might play a role in microtubule bundling. This chain is Serine-rich coiled-coil domain-containing protein 2 (Ccser2), found in Mus musculus (Mouse).